The following is a 144-amino-acid chain: NADH dehydrogenase [ubiquinone] 1 alpha subcomplex subunit 13 (144 aa).

Residue A2 is modified to N-acetylalanine. A helical membrane pass occupies residues 30-51 (LSGYSMFAVGIGALLFGYWSMM).

In terms of assembly, complex I is composed of 45 different subunits. Interacts with CARD15, but not with CARD4. Interacts with STAT3, but not with STAT1, STAT2 and STAT5A. Interacts with OLFM4.

Its subcellular location is the mitochondrion inner membrane. The protein resides in the nucleus. Its function is as follows. Accessory subunit of the mitochondrial membrane respiratory chain NADH dehydrogenase (Complex I), that is believed not to be involved in catalysis. Complex I functions in the transfer of electrons from NADH to the respiratory chain. The immediate electron acceptor for the enzyme is believed to be ubiquinone. Involved in the interferon/all-trans-retinoic acid (IFN/RA) induced cell death. This apoptotic activity is inhibited by interaction with viral IRF1. Prevents the transactivation of STAT3 target genes. May play a role in CARD15-mediated innate mucosal responses and serve to regulate intestinal epithelial cell responses to microbes. This Bos taurus (Bovine) protein is NADH dehydrogenase [ubiquinone] 1 alpha subcomplex subunit 13 (NDUFA13).